Here is a 334-residue protein sequence, read N- to C-terminus: S-adenosylmethionine decarboxylase proenzyme (334 aa).

Residue phenylalanine 7 participates in substrate binding. Active-site residues include glutamate 8 and glutamate 11. Glutamate 67 is a substrate binding site. The Schiff-base intermediate with substrate; via pyruvic acid role is filled by serine 68. Serine 68 is modified (pyruvic acid (Ser); by autocatalysis). Cysteine 82 functions as the Proton donor; for catalytic activity in the catalytic mechanism. Residue phenylalanine 223 participates in substrate binding. Active-site proton acceptor; for processing activity residues include serine 229 and histidine 243. A substrate-binding site is contributed by glutamate 247. Phosphoserine is present on serine 298.

The protein belongs to the eukaryotic AdoMetDC family. In terms of assembly, heterotetramer of two alpha and two beta chains. It depends on pyruvate as a cofactor. Post-translationally, is synthesized initially as an inactive proenzyme. Formation of the active enzyme involves a self-maturation process in which the active site pyruvoyl group is generated from an internal serine residue via an autocatalytic post-translational modification. Two non-identical subunits are generated from the proenzyme in this reaction, and the pyruvate is formed at the N-terminus of the alpha chain, which is derived from the carboxyl end of the proenzyme. The post-translation cleavage follows an unusual pathway, termed non-hydrolytic serinolysis, in which the side chain hydroxyl group of the serine supplies its oxygen atom to form the C-terminus of the beta chain, while the remainder of the serine residue undergoes an oxidative deamination to produce ammonia and the pyruvoyl group blocking the N-terminus of the alpha chain.

It catalyses the reaction S-adenosyl-L-methionine + H(+) = S-adenosyl 3-(methylsulfanyl)propylamine + CO2. It participates in amine and polyamine biosynthesis; S-adenosylmethioninamine biosynthesis; S-adenosylmethioninamine from S-adenosyl-L-methionine: step 1/1. Functionally, essential for biosynthesis of the polyamines spermidine and spermine. Promotes maintenance and self-renewal of embryonic stem cells, by maintaining spermine levels. This Bos taurus (Bovine) protein is S-adenosylmethionine decarboxylase proenzyme (AMD1).